The chain runs to 561 residues: MTFRDILSVTFEGPRSSSSTGGSGAGGGAGTVGPEGGAVGGVPGATGGGAVVGTGSGEDNQSSTGEPGAAASGEVNGSAAVGGLVVSAQGVGVGVFLAAFILTAVAGNLLVILSVACNRHLQTVTNYFIVNLAVADLLLSAAVLPFSATMEVLGFWAFGRTFCDVWAAVDVLCCTASILSLCTISVDRYVGVRHSLKYPAIMTERKAAAILALLWAVALVVSVGPLLGWKEPVPPDERFCGITEEVGYAIFSSVCSFYLPMAVIVVMYCRVYVVARSTTRSLEAGIKREPGKASEVVLRIHCRGAATSAKGYPGTQSSKGHTLRSSLSVRLLKFSREKKAAKTLAIVVGVFVLCWFPFFFVLPLGSLFPQLKPSEGVFKVIFWLGYFNSCVNPLIYPCSSREFKRAFLRLLRCQCRRRRRRLWAVYGHHWRASTGDARSDCAPSPRIAPPGAPLALTAHPGAGSADTPETQDSVSSSRKPASALREWRLLGPLQRPTTQLRAKVSSLSHKIRSGARRAETACALRSEVEAVSLNVPQDGAEAVICQAYEPGDYSNLRETDI.

Residues 1–90 (MTFRDILSVT…VGGLVVSAQG (90 aa)) lie on the Extracellular side of the membrane. A disordered region spans residues 10-71 (TFEGPRSSSS…SSTGEPGAAA (62 aa)). A compositionally biased stretch (gly residues) spans 21–56 (GGSGAGGGAGTVGPEGGAVGGVPGATGGGAVVGTGS). N-linked (GlcNAc...) asparagine glycosylation is found at N60 and N76. Residues 91 to 115 (VGVGVFLAAFILTAVAGNLLVILSV) traverse the membrane as a helical segment. The Cytoplasmic segment spans residues 116–127 (ACNRHLQTVTNY). Residues 128–153 (FIVNLAVADLLLSAAVLPFSATMEVL) traverse the membrane as a helical segment. Topologically, residues 154-163 (GFWAFGRTFC) are extracellular. Residues 164–186 (DVWAAVDVLCCTASILSLCTISV) traverse the membrane as a helical segment. Residues 187-207 (DRYVGVRHSLKYPAIMTERKA) are Cytoplasmic-facing. A helical transmembrane segment spans residues 208-232 (AAILALLWAVALVVSVGPLLGWKEP). At 233–245 (VPPDERFCGITEE) the chain is on the extracellular side. Residues 246 to 269 (VGYAIFSSVCSFYLPMAVIVVMYC) traverse the membrane as a helical segment. Over 270–342 (RVYVVARSTT…KFSREKKAAK (73 aa)) the chain is Cytoplasmic. The helical transmembrane segment at 343–367 (TLAIVVGVFVLCWFPFFFVLPLGSL) threads the bilayer. Over 368–374 (FPQLKPS) the chain is Extracellular. A helical membrane pass occupies residues 375-399 (EGVFKVIFWLGYFNSCVNPLIYPCS). At 400-561 (SREFKRAFLR…DYSNLRETDI (162 aa)) the chain is on the cytoplasmic side. Residue C413 is the site of S-palmitoyl cysteine attachment. Positions 452–481 (APLALTAHPGAGSADTPETQDSVSSSRKPA) are disordered. The span at 467 to 479 (TPETQDSVSSSRK) shows a compositional bias: polar residues.

The protein belongs to the G-protein coupled receptor 1 family. Adrenergic receptor subfamily. ADRA1D sub-subfamily. Interacts with FLNA (via filamin repeat 21); increases PKA-mediated phosphorylation of FLNA. Post-translationally, palmitoylated. Palmitoylation by ZDHHC21 may increase the expression of the receptor and regulate downstream signaling. Vas deferens, hippocampus, cerebral cortex, aorta, brain stem, heart and spleen.

The protein resides in the cell membrane. In terms of biological role, this alpha-adrenergic receptor mediates its effect through the influx of extracellular calcium. This chain is Alpha-1D adrenergic receptor (Adra1d), found in Rattus norvegicus (Rat).